The chain runs to 400 residues: Tryptophan synthase beta chain (400 aa).

Residue K92 is modified to N6-(pyridoxal phosphate)lysine.

Belongs to the TrpB family. Tetramer of two alpha and two beta chains. It depends on pyridoxal 5'-phosphate as a cofactor.

The enzyme catalyses (1S,2R)-1-C-(indol-3-yl)glycerol 3-phosphate + L-serine = D-glyceraldehyde 3-phosphate + L-tryptophan + H2O. It functions in the pathway amino-acid biosynthesis; L-tryptophan biosynthesis; L-tryptophan from chorismate: step 5/5. The beta subunit is responsible for the synthesis of L-tryptophan from indole and L-serine. The polypeptide is Tryptophan synthase beta chain (Chromobacterium violaceum (strain ATCC 12472 / DSM 30191 / JCM 1249 / CCUG 213 / NBRC 12614 / NCIMB 9131 / NCTC 9757 / MK)).